Reading from the N-terminus, the 195-residue chain is HTH-type transcriptional regulator BetI (195 aa).

One can recognise an HTH tetR-type domain in the interval 8 to 68 (SIRRRQLIDA…ATMRDITSQL (61 aa)). A DNA-binding region (H-T-H motif) is located at residues 31–50 (TIAQIARRAGVSTGIISHYF).

It participates in amine and polyamine biosynthesis; betaine biosynthesis via choline pathway [regulation]. Functionally, repressor involved in the biosynthesis of the osmoprotectant glycine betaine. It represses transcription of the choline transporter BetT and the genes of BetAB involved in the synthesis of glycine betaine. The chain is HTH-type transcriptional regulator BetI from Shigella flexneri serotype 5b (strain 8401).